The chain runs to 94 residues: MLKPXGDRVVLKIEEKEQTVGGFVLAGSAQEKTKTAQVVATGQGVRTLNGDLVAPSVKTGDRVLVEAHAGLDVKDGDEKYIIVGEANILAIIEE.

It belongs to the GroES chaperonin family. Heptamer of 7 subunits arranged in a ring. Interacts with the chaperonin GroEL.

It localises to the cytoplasm. In terms of biological role, together with the chaperonin GroEL, plays an essential role in assisting protein folding. The GroEL-GroES system forms a nano-cage that allows encapsulation of the non-native substrate proteins and provides a physical environment optimized to promote and accelerate protein folding. GroES binds to the apical surface of the GroEL ring, thereby capping the opening of the GroEL channel. This is Co-chaperonin GroES from Streptococcus pneumoniae serotype 19F (strain G54).